A 600-amino-acid chain; its full sequence is Baculoviral IAP repeat-containing protein 3 (600 aa).

Residues 27–94 form a BIR 1 repeat; the sequence is ELYRLSTYSA…RKLYPSCNFV (68 aa). Serine 138 bears the Phosphoserine mark. 2 BIR repeats span residues 167–233 and 253–320; these read EKAR…CPFL and HAAR…CEYL. Positions 290, 293, 310, and 317 each coordinate Zn(2+). Positions 436 to 525 constitute a CARD domain; it reads EESDDLALIR…ALYRDIFVQQ (90 aa). An RING-type zinc finger spans residues 553-588; it reads CKVCMDREVSIVFIPCGHLVVCKDCAPSLRKCPICR.

The protein belongs to the IAP family. As to quaternary structure, interacts with PRSS25; the interaction inhibits apoptotic suppressor activity. The BIR motifs region interacts with TNF receptor associated factors 1 and 2 (TRAF1 and TRAF2) to form a heteromeric complex, which is then recruited to the tumor necrosis factor receptor 2 (TNFR2). Interaction with TRAF2 is required for ubiquitination of IKBKE, degradation of NFKBIA and activation of NF-kappa-B. Interacts with RIP1, RIP2, RIP3, RIP4 and USP19. Auto-ubiquitinated and degraded by the proteasome in apoptotic cells.

The protein localises to the cytoplasm. Its subcellular location is the nucleus. The catalysed reaction is S-ubiquitinyl-[E2 ubiquitin-conjugating enzyme]-L-cysteine + [acceptor protein]-L-lysine = [E2 ubiquitin-conjugating enzyme]-L-cysteine + N(6)-ubiquitinyl-[acceptor protein]-L-lysine.. Its activity is regulated as follows. USP19 regulates the stability of BIRC3/c-IAP2 by preventing its ubiquitination. Its function is as follows. Multi-functional protein which regulates not only caspases and apoptosis, but also modulates inflammatory signaling and immunity, mitogenic kinase signaling and cell proliferation, as well as cell invasion and metastasis. Acts as an E3 ubiquitin-protein ligase regulating NF-kappa-B signaling and regulates both canonical and non-canonical NF-kappa-B signaling by acting in opposite directions: acts as a positive regulator of the canonical pathway and suppresses constitutive activation of non-canonical NF-kappa-B signaling. The target proteins for its E3 ubiquitin-protein ligase activity include: RIPK1, RIPK2, RIPK3, RIPK4, CASP3, CASP7, CASP8, IKBKE, TRAF1, and BCL10. Acts as an important regulator of innate immune signaling via regulation of Toll-like receptors (TLRs), Nodlike receptors (NLRs) and RIG-I like receptors (RLRs), collectively referred to as pattern recognition receptors (PRRs). Protects cells from spontaneous formation of the ripoptosome, a large multi-protein complex that has the capability to kill cancer cells in a caspase-dependent and caspase-independent manner. Suppresses ripoptosome formation by ubiquitinating RIPK1 and CASP8. The sequence is that of Baculoviral IAP repeat-containing protein 3 (Birc3) from Mus musculus (Mouse).